The chain runs to 37 residues: Large ribosomal subunit protein bL36 (37 aa).

It belongs to the bacterial ribosomal protein bL36 family.

This Clostridioides difficile (strain 630) (Peptoclostridium difficile) protein is Large ribosomal subunit protein bL36.